A 95-amino-acid polypeptide reads, in one-letter code: Aspartyl/glutamyl-tRNA(Asn/Gln) amidotransferase subunit C (95 aa).

This sequence belongs to the GatC family. In terms of assembly, heterotrimer of A, B and C subunits.

It carries out the reaction L-glutamyl-tRNA(Gln) + L-glutamine + ATP + H2O = L-glutaminyl-tRNA(Gln) + L-glutamate + ADP + phosphate + H(+). The enzyme catalyses L-aspartyl-tRNA(Asn) + L-glutamine + ATP + H2O = L-asparaginyl-tRNA(Asn) + L-glutamate + ADP + phosphate + 2 H(+). In terms of biological role, allows the formation of correctly charged Asn-tRNA(Asn) or Gln-tRNA(Gln) through the transamidation of misacylated Asp-tRNA(Asn) or Glu-tRNA(Gln) in organisms which lack either or both of asparaginyl-tRNA or glutaminyl-tRNA synthetases. The reaction takes place in the presence of glutamine and ATP through an activated phospho-Asp-tRNA(Asn) or phospho-Glu-tRNA(Gln). This Desulforapulum autotrophicum (strain ATCC 43914 / DSM 3382 / VKM B-1955 / HRM2) (Desulfobacterium autotrophicum) protein is Aspartyl/glutamyl-tRNA(Asn/Gln) amidotransferase subunit C.